Reading from the N-terminus, the 253-residue chain is MTMSQDSRSTPGSTVDPAEIAKFSKLSETWWDPKGKMAPLHKINPLRLTYIRDAACRKFERNAKSLNCLSGLRMLDIGCGAGLLCEPFTRLGAQVVGVDPSASNIAAAKLHAEKGHMSIDYRCTTIEEMDPRERFDIVLAMEVVEHVTDVGAFLGRCAAVLKPGGLMVVSTLNRNWKSFALAIVGAEYVLRWLPRGTHEWSKFVTPDELTKYLLDNRLVITEQSGVVYSPFADRWSLSSDMDVNYMVVAEQMV.

S-adenosyl-L-methionine-binding residues include Arg47, Gly78, Asp99, and Met141.

This sequence belongs to the methyltransferase superfamily. UbiG/COQ3 family.

It catalyses the reaction a 3-demethylubiquinol + S-adenosyl-L-methionine = a ubiquinol + S-adenosyl-L-homocysteine + H(+). It carries out the reaction a 3-(all-trans-polyprenyl)benzene-1,2-diol + S-adenosyl-L-methionine = a 2-methoxy-6-(all-trans-polyprenyl)phenol + S-adenosyl-L-homocysteine + H(+). The protein operates within cofactor biosynthesis; ubiquinone biosynthesis. Its function is as follows. O-methyltransferase that catalyzes the 2 O-methylation steps in the ubiquinone biosynthetic pathway. This is Ubiquinone biosynthesis O-methyltransferase from Bradyrhizobium sp. (strain ORS 278).